Reading from the N-terminus, the 71-residue chain is Small ribosomal subunit protein bS21 (71 aa).

The segment covering 34 to 44 (RREHYEKPTSE) has biased composition (basic and acidic residues). Positions 34-71 (RREHYEKPTSERKRKKAAAVKRHAKKLSRDNARRTRLY) are disordered. A compositionally biased stretch (basic residues) spans 45–59 (RKRKKAAAVKRHAKK). A compositionally biased stretch (basic and acidic residues) spans 60 to 71 (LSRDNARRTRLY).

Belongs to the bacterial ribosomal protein bS21 family.

This chain is Small ribosomal subunit protein bS21, found in Idiomarina loihiensis (strain ATCC BAA-735 / DSM 15497 / L2-TR).